Reading from the N-terminus, the 284-residue chain is Nucleotide-binding protein Pput_0988 (284 aa).

Position 8-15 (8-15 (GRSGSGKS)) interacts with ATP. 60 to 63 (DARN) is a GTP binding site.

It belongs to the RapZ-like family.

In terms of biological role, displays ATPase and GTPase activities. This is Nucleotide-binding protein Pput_0988 from Pseudomonas putida (strain ATCC 700007 / DSM 6899 / JCM 31910 / BCRC 17059 / LMG 24140 / F1).